The following is a 1706-amino-acid chain: Bifunctional hemolysin/adenylate cyclase (1706 aa).

Positions 1–399 are a, catalytic; that stretch reads MQQSHQAGYA…RRPSLGAVER (399 aa). 349 to 356 serves as a coordination point for ATP; the sequence is AYGVAGKS. Residues 367–405 are disordered; sequence GVPGGRSKSSPDVLETVPASPGLRRPSLGAVERQDSGYD. Residues 400–912 form a b, Ala/Gly-rich region; it reads QDSGYDSLDG…LKHSIKLEVI (513 aa). Residues 500–698 form a required for interaction with CyaC region; the sequence is LSAAVFGLGE…SVVGAPVAVV (199 aa). Residues Lys860 and Lys983 are each lipidated (N6-palmitoyl lysine). The c stretch occupies residues 913–1656; that stretch reads GGDGDDVVLA…RDADHRVEAI (744 aa). 17 Hemolysin-type calcium-binding repeats span residues 1014-1031, 1032-1049, 1050-1067, 1155-1172, 1173-1190, 1279-1296, 1297-1314, 1315-1332, 1335-1352, 1411-1428, 1429-1446, 1447-1464, 1468-1484, 1537-1554, 1555-1572, 1573-1590, and 1603-1620; these read IGGA…DNFL, AGGA…NDTL, VGGE…DDVF, WGDD…DDIL, RGGL…NDIF, MGQG…DDLL, FGGD…NDTL, YGGL…NDWF, TPAR…VDTV, TGDA…ADVL, AGGE…DDQL, SGDA…DDWF, AANA…NDTV, IGDA…NDVL, SGGA…SDLL, SGDA…DDTY, and ESGG…ADQL. Positions 1657–1706 are d, Asp/Gly-rich; that stretch reads HAANQAIDPAGIEKLVEAMAQYPDPGAAAAAPPAARVPDTLMQSLAVNWR.

In the N-terminal section; belongs to the adenylyl cyclase class-2 family. It in the C-terminal section; belongs to the RTX prokaryotic toxin family. Released in a processed form. In terms of processing, palmitoylated at Lys-860 and Lys-983 by CyaC. The toxin only becomes active when modified in position Lys-983: palmitoylation is required for efficient membrane insertion and pore formation of the acylated Hemolysin chain.

The protein localises to the secreted. It localises to the host cell membrane. It catalyses the reaction ATP = 3',5'-cyclic AMP + diphosphate. Its activity is regulated as follows. Activated by host calmodulin. Bifunctional adenylate cyclase toxin-hemolysin that plays a crucial role in host colonization. It causes whooping cough by acting on mammalian cells by elevating cAMP-concentration and thus disrupts normal cell function. In terms of biological role, adenylate cyclase that is activated by host intracellular calmodulin and catalyzes un-regulated conversion of ATP to cAMP, thereby impairing microbicidal functions of immune effector cells and inducing apoptosis of lung macrophages. Functionally, hemolysin that forms small cation-selective membrane channels, leading to hemolytic activity. The hemolytic activity of CyaA is weak compared with that of the HlyA of E.coli. The protein is Bifunctional hemolysin/adenylate cyclase (cya) of Bordetella bronchiseptica (strain ATCC BAA-588 / NCTC 13252 / RB50) (Alcaligenes bronchisepticus).